Consider the following 488-residue polypeptide: Intron-encoded DNA endonuclease I-AniI (488 aa).

The interval 1–169 (MRILKSHPLL…DIVEFIWGGL (169 aa)) is cobA exon 1 encoded. The interval 170 to 488 (YTDEPQCGDV…SEKIKIPSNY (319 aa)) is cobA intron encoded.

In the C-terminal section; belongs to the LAGLIDADG endonuclease family. Homodimer. Mg(2+) is required as a cofactor. The mature protein may arise from proteolytic cleavage of an in-frame translation of cobA exon 1 plus intron, containing the I-AniI open reading frame. Cleavage may take place close to Met-213 resulting in an active endonuclease/maturase of about 30 kDa.

It localises to the mitochondrion. Its function is as follows. Mitochondrial DNA endonuclease and mRNA maturase involved in intron homing and required for splicing of the cytochrome b (cobA) gene intron, containing its own coding sequence. The protein stimulates the intrinsic ribozyme activity of the intron through binding to and stabilizing specific secondary and tertiary structure elements in the RNA. As an endonuclease it introduces a specific double-strand break at the junction of the two exons the cobA gene and thus mediates the insertion of an intron, containing its own coding sequence (group I intron), into an intronless gene. Recognizes with limited specificity and cleaves the sequence 5'-GAGGAGGTTTCTCTGTA-3'. The proteins RNA and DNA recognition and binding surfaces are independent. This is Intron-encoded DNA endonuclease I-AniI (I-AniI) from Emericella nidulans (Aspergillus nidulans).